The following is a 286-amino-acid chain: Bifunctional protein FolD (286 aa).

NADP(+) is bound by residues 165–167 (GRS) and serine 190.

It belongs to the tetrahydrofolate dehydrogenase/cyclohydrolase family. In terms of assembly, homodimer.

The catalysed reaction is (6R)-5,10-methylene-5,6,7,8-tetrahydrofolate + NADP(+) = (6R)-5,10-methenyltetrahydrofolate + NADPH. It catalyses the reaction (6R)-5,10-methenyltetrahydrofolate + H2O = (6R)-10-formyltetrahydrofolate + H(+). It functions in the pathway one-carbon metabolism; tetrahydrofolate interconversion. Catalyzes the oxidation of 5,10-methylenetetrahydrofolate to 5,10-methenyltetrahydrofolate and then the hydrolysis of 5,10-methenyltetrahydrofolate to 10-formyltetrahydrofolate. This Burkholderia cenocepacia (strain ATCC BAA-245 / DSM 16553 / LMG 16656 / NCTC 13227 / J2315 / CF5610) (Burkholderia cepacia (strain J2315)) protein is Bifunctional protein FolD.